Here is a 492-residue protein sequence, read N- to C-terminus: N-succinylglutamate 5-semialdehyde dehydrogenase (492 aa).

220–225 (GSASTG) lines the NAD(+) pocket. Catalysis depends on residues E243 and C277.

The protein belongs to the aldehyde dehydrogenase family. AstD subfamily.

The enzyme catalyses N-succinyl-L-glutamate 5-semialdehyde + NAD(+) + H2O = N-succinyl-L-glutamate + NADH + 2 H(+). It functions in the pathway amino-acid degradation; L-arginine degradation via AST pathway; L-glutamate and succinate from L-arginine: step 4/5. In terms of biological role, catalyzes the NAD-dependent reduction of succinylglutamate semialdehyde into succinylglutamate. The polypeptide is N-succinylglutamate 5-semialdehyde dehydrogenase (Salmonella paratyphi A (strain AKU_12601)).